The following is a 1076-amino-acid chain: GPI inositol-deacylase A (1076 aa).

The chain crosses the membrane as a helical span at residues 3 to 23 (IATFPALAITALALVLWATVA). N-linked (GlcNAc...) asparagine glycosylation is found at N48 and N119. S240 is a catalytic residue. The N-linked (GlcNAc...) asparagine glycan is linked to N404. A run of 2 helical transmembrane segments spans residues 765-785 (FLGF…LCLL) and 815-835 (WILA…SLLY). N-linked (GlcNAc...) asparagine glycosylation is present at N849. The next 3 helical transmembrane spans lie at 855–875 (FLGP…HWLL), 877–897 (ILTL…IAPE), and 910–930 (FLLL…VAVL). 2 N-linked (GlcNAc...) asparagine glycosylation sites follow: N952 and N966. Helical transmembrane passes span 970-990 (SLLL…VVWL), 1006-1026 (EVSA…GIMI), and 1035-1055 (IYAT…HGVV).

This sequence belongs to the GPI inositol-deacylase family.

It localises to the endoplasmic reticulum membrane. Functionally, involved in inositol deacylation of GPI-anchored proteins which plays important roles in the quality control and ER-associated degradation of GPI-anchored proteins. The polypeptide is GPI inositol-deacylase A (BST1A) (Yarrowia lipolytica (strain CLIB 122 / E 150) (Yeast)).